Consider the following 1052-residue polypeptide: Germline survival defective-1 (1052 aa).

A signal peptide spans 1-25 (MRCLISYLFHSFLIFLKFIRSDVTA). Disordered stretches follow at residues 41 to 320 (LMKS…DPKN), 478 to 543 (VNGI…QSVP), 667 to 689 (PSSQ…EEFE), 933 to 965 (KQTL…NSYA), and 1033 to 1052 (SNNT…NSNF). The segment covering 67-145 (ATATAAATTQ…SSTSSTSQQT (79 aa)) has biased composition (low complexity). A compositionally biased stretch (polar residues) spans 163–172 (TSNTANSQSG). Positions 178–190 (TNKDRPKEKEKNT) are enriched in basic and acidic residues. Residues 244-279 (NAKSSGFLSNSSLSSAGQISASSAPPVSTTPTAIPI) are compositionally biased toward low complexity. The segment covering 305 to 320 (KRDEEPMPYKSTDPKN) has biased composition (basic and acidic residues). The gld-4 binding stretch occupies residues 424–732 (QHPPGLPPLL…QIEKNDNLFS (309 aa)). Polar residues predominate over residues 480 to 514 (GISNNIPSDRQQLDSKPNTARGSSGNINQSNTTSP). Residues 674 to 689 (DENDTDSDHESEEEFE) show a composition bias toward acidic residues. The segment at 892 to 1052 (PIELPVNMQP…SGGGNQNSNF (161 aa)) is gld-3 binding. Residues 950 to 963 (EGSQQNGGTSSSNS) show a composition bias toward low complexity. The segment covering 1038-1052 (GVNGNSGGGNQNSNF) has biased composition (gly residues).

Isoform C interacts (via C-terminus) with gld-3 isoform A (via C-terminus) in an RNA-independent manner. Isoform C interacts with gld-4. As to expression, expressed in the germline (at protein level). In the early embryo is expressed in all cells, then becomes gradually restricted to the germ cell lineage and enriches in P granules (at protein level). In adult hermaphrodites, is expressed in the mitotic region, accumulates during early stages of meiotic prophase I and is slightly less abundant in maturing oocytes (at protein level).

Its subcellular location is the cytoplasm. It is found in the cytoplasmic granule. In terms of biological role, required maternally for germline survival by forming a maternal complex with gld-3. During hermaphrodite development forms a complex with gld-3 which promotes the sperm/oocyte switch freeing the translational repressor fbf to turn off sperm promoting factors. Required for proper oocyte differentiation and oogenic meiotic arrest. Stimulates the enzymatic activity of gld-4 and together they prevent gld-1 mRNA degradation. The chain is Germline survival defective-1 from Caenorhabditis elegans.